Consider the following 443-residue polypeptide: Tol-Pal system protein TolB (443 aa).

An N-terminal signal peptide occupies residues 1–31 (MTRLAKGKWRSTLGAMMALAVMVAAIPQARA). Residues 423-432 (NERQISTPTE) show a composition bias toward polar residues. Positions 423 to 443 (NERQISTPTEASDPAWSPLLP) are disordered.

Belongs to the TolB family. In terms of assembly, the Tol-Pal system is composed of five core proteins: the inner membrane proteins TolA, TolQ and TolR, the periplasmic protein TolB and the outer membrane protein Pal. They form a network linking the inner and outer membranes and the peptidoglycan layer.

It is found in the periplasm. Functionally, part of the Tol-Pal system, which plays a role in outer membrane invagination during cell division and is important for maintaining outer membrane integrity. The sequence is that of Tol-Pal system protein TolB from Rhodospirillum rubrum (strain ATCC 11170 / ATH 1.1.1 / DSM 467 / LMG 4362 / NCIMB 8255 / S1).